A 301-amino-acid polypeptide reads, in one-letter code: Golgi to ER traffic protein 2 (301 aa).

The Cytoplasmic segment spans residues 1–167 (MSEPVVDTAE…LEYNTYNQKL (167 aa)). Residues 42–55 (SQGSSVKTSGVKSV) are compositionally biased toward low complexity. The interval 42-93 (SQGSSVKTSGVKSVLDQEKEATSSHDDDPEIQDITEITTPPPRTPPIGEDAP) is disordered. Over residues 56–67 (LDQEKEATSSHD) the composition is skewed to basic and acidic residues. Residues 168–188 (WKFRFLLVRVLVTLFNFFYHY) form a helical membrane-spanning segment. The Lumenal segment spans residues 189-214 (TSISDFHASNYAYVRDLSSEEYPVRD). The helical transmembrane segment at 215-234 (FFTWFATSEVVLVAAYYSVF) threads the bilayer. Residues 235 to 278 (HSLGLFHAANQNSIILKVMSMGSMILPQLESYKPLVARFLGYYE) are Cytoplasmic-facing. The helical transmembrane segment at 279 to 299 (LLGIVLGGLSLVIVLFGLLSF) threads the bilayer. The Lumenal segment spans residues 300–301 (AN).

The protein belongs to the GET2 family. As to quaternary structure, component of the Golgi to ER traffic (GET) complex, which is composed of GET1, GET2 and GET3. Within the complex, GET1 and GET2 form a heterotetramer which is stabilized by phosphatidylinositol binding and which binds to the GET3 homodimer.

It localises to the endoplasmic reticulum membrane. The protein resides in the golgi apparatus membrane. Required for the post-translational delivery of tail-anchored (TA) proteins to the endoplasmic reticulum. Together with GET1, acts as a membrane receptor for soluble GET3, which recognizes and selectively binds the transmembrane domain of TA proteins in the cytosol. The GET complex cooperates with the HDEL receptor ERD2 to mediate the ATP-dependent retrieval of resident ER proteins that contain a C-terminal H-D-E-L retention signal from the Golgi to the ER. This is Golgi to ER traffic protein 2 from Candida dubliniensis (strain CD36 / ATCC MYA-646 / CBS 7987 / NCPF 3949 / NRRL Y-17841) (Yeast).